Reading from the N-terminus, the 535-residue chain is ABC1 family protein C10F6.14c (535 aa).

It belongs to the protein kinase superfamily. ADCK protein kinase family.

The protein is ABC1 family protein C10F6.14c of Schizosaccharomyces pombe (strain 972 / ATCC 24843) (Fission yeast).